Here is a 331-residue protein sequence, read N- to C-terminus: Glyceraldehyde-3-phosphate dehydrogenase, cytosolic (331 aa).

Residues 12–13 (RI), Asp34, and Arg78 contribute to the NAD(+) site. D-glyceraldehyde 3-phosphate is bound by residues 149–151 (SCT), Thr180, 209–210 (TG), and Arg232. Cys150 acts as the Nucleophile in catalysis. NAD(+) is bound at residue Asn314.

It belongs to the glyceraldehyde-3-phosphate dehydrogenase family. As to quaternary structure, homotetramer.

The protein localises to the cytoplasm. It carries out the reaction D-glyceraldehyde 3-phosphate + phosphate + NAD(+) = (2R)-3-phospho-glyceroyl phosphate + NADH + H(+). Its pathway is carbohydrate degradation; glycolysis; pyruvate from D-glyceraldehyde 3-phosphate: step 1/5. In Trypanosoma brucei brucei, this protein is Glyceraldehyde-3-phosphate dehydrogenase, cytosolic.